The sequence spans 502 residues: MSIKAEEISTLIKQQIENYQSEIEVHDVGTVIQVGDGIARVHGLDNCMAGELVEFSNGVLGLAQNLEESNVGIVILGPYKDIREGDEVKRTGRIMEVPVGEELLGRVVNPLGQPVDGMGPVLTSKTRPIESPAPGVMDRKSVHEPLQTGIKSIDALIPIGRGQRELIIGDRQTGKTSIAIDTILNQKDQDMICIYVAIGQKESTVRGVVETLRKHGALDYTIVVTASASQPAPLLYLAPYAGVAMGEEFMYNGKHVLVVYDDLSKQATAYRELSLLLRRPPGREAFPGDVFYLHSRLLERAAKLSDAKGGGSLTALPFVETQAGDISAYIPTNVISITDGQIFLQSDLFFSGVRPAVNPGLSVSRVGGSAQIKAMKKVAGTLRLDLASYRELEAFAQFGSDLDKATQAKLNRGARTVEVLKQDLHKPLRVEKQVAILYALTRGFLDDVPVEDIKRFEEELFMYLDQNHKDLLDSIAQTGNLPADEDMKGAIEGFKRTFAPSN.

The disordered stretch occupies residues 117–139 (GMGPVLTSKTRPIESPAPGVMDR). 169 to 176 (GDRQTGKT) contacts ATP.

This sequence belongs to the ATPase alpha/beta chains family. As to quaternary structure, F-type ATPases have 2 components, CF(1) - the catalytic core - and CF(0) - the membrane proton channel. CF(1) has five subunits: alpha(3), beta(3), gamma(1), delta(1), epsilon(1). CF(0) has three main subunits: a(1), b(2) and c(9-12). The alpha and beta chains form an alternating ring which encloses part of the gamma chain. CF(1) is attached to CF(0) by a central stalk formed by the gamma and epsilon chains, while a peripheral stalk is formed by the delta and b chains.

The protein resides in the cell membrane. It carries out the reaction ATP + H2O + 4 H(+)(in) = ADP + phosphate + 5 H(+)(out). Functionally, produces ATP from ADP in the presence of a proton gradient across the membrane. The alpha chain is a regulatory subunit. This is ATP synthase subunit alpha from Bacillus licheniformis (strain ATCC 14580 / DSM 13 / JCM 2505 / CCUG 7422 / NBRC 12200 / NCIMB 9375 / NCTC 10341 / NRRL NRS-1264 / Gibson 46).